A 222-amino-acid chain; its full sequence is Large ribosomal subunit protein bL20 (222 aa).

Belongs to the bacterial ribosomal protein bL20 family.

In terms of biological role, binds directly to 23S ribosomal RNA and is necessary for the in vitro assembly process of the 50S ribosomal subunit. It is not involved in the protein synthesizing functions of that subunit. This Paenarthrobacter aurescens (strain TC1) protein is Large ribosomal subunit protein bL20 (rplT).